The primary structure comprises 209 residues: Pyridoxine/pyridoxamine 5'-phosphate oxidase (209 aa).

Substrate contacts are provided by residues 7-10 (RADY) and Lys-64. FMN contacts are provided by residues 59–64 (RIVLLK), 74–75 (FT), and Lys-81. The substrate site is built by Tyr-121, Arg-125, and Ser-129. FMN is bound by residues 138–139 (QS), Trp-182, and Arg-192.

It belongs to the pyridoxamine 5'-phosphate oxidase family. In terms of assembly, homodimer. The cofactor is FMN.

The enzyme catalyses pyridoxamine 5'-phosphate + O2 + H2O = pyridoxal 5'-phosphate + H2O2 + NH4(+). The catalysed reaction is pyridoxine 5'-phosphate + O2 = pyridoxal 5'-phosphate + H2O2. It participates in cofactor metabolism; pyridoxal 5'-phosphate salvage; pyridoxal 5'-phosphate from pyridoxamine 5'-phosphate: step 1/1. It functions in the pathway cofactor metabolism; pyridoxal 5'-phosphate salvage; pyridoxal 5'-phosphate from pyridoxine 5'-phosphate: step 1/1. Functionally, catalyzes the oxidation of either pyridoxine 5'-phosphate (PNP) or pyridoxamine 5'-phosphate (PMP) into pyridoxal 5'-phosphate (PLP). The chain is Pyridoxine/pyridoxamine 5'-phosphate oxidase from Haemophilus ducreyi (strain 35000HP / ATCC 700724).